We begin with the raw amino-acid sequence, 596 residues long: Elongation factor 4 (596 aa).

The tr-type G domain occupies 2–184; the sequence is KHIRNFSIIA…VIVAKIPPPE (183 aa). Residues 14–19 and 131–134 contribute to the GTP site; these read DHGKST and NKID.

The protein belongs to the TRAFAC class translation factor GTPase superfamily. Classic translation factor GTPase family. LepA subfamily.

Its subcellular location is the cell inner membrane. The catalysed reaction is GTP + H2O = GDP + phosphate + H(+). Functionally, required for accurate and efficient protein synthesis under certain stress conditions. May act as a fidelity factor of the translation reaction, by catalyzing a one-codon backward translocation of tRNAs on improperly translocated ribosomes. Back-translocation proceeds from a post-translocation (POST) complex to a pre-translocation (PRE) complex, thus giving elongation factor G a second chance to translocate the tRNAs correctly. Binds to ribosomes in a GTP-dependent manner. The chain is Elongation factor 4 from Shewanella sp. (strain W3-18-1).